An 863-amino-acid chain; its full sequence is Disintegrin and metalloproteinase domain-containing protein 15 (863 aa).

An N-terminal signal peptide occupies residues 1–17; it reads MRLALLWALGLLGAGSP. A propeptide spanning residues 18–206 is cleaved from the precursor; it reads LPSWPLPNIG…LGQRHIRRRR (189 aa). Positions 22 to 45 are disordered; it reads PLPNIGGTEEQQAESEKAPREPLE. Basic and acidic residues predominate over residues 35-44; sequence ESEKAPREPL. A Cysteine switch motif is present at residues 177–184; that stretch reads HTCALSWR. Cys179 is a binding site for Zn(2+). The Extracellular segment spans residues 207–696; the sequence is DVVTETKTVE…QLKATSSLTT (490 aa). Positions 213 to 414 constitute a Peptidase M12B domain; that stretch reads KTVELVIVAD…GMGSCLFERL (202 aa). N-linked (GlcNAc...) asparagine glycosylation is present at Asn237. 4 disulfides stabilise this stretch: Cys323–Cys409, Cys365–Cys393, Cys367–Cys376, and Cys480–Cys500. His348 contributes to the Zn(2+) binding site. The active site involves Glu349. Zn(2+) contacts are provided by His352 and His358. N-linked (GlcNAc...) asparagine glycans are attached at residues Asn389 and Asn392. The region spanning 421–508 is the Disintegrin domain; that stretch reads AAFCGNMFVE…QCPPDVSLGD (88 aa). A Cell attachment site motif is present at residues 484-486; the sequence is RGD. Residues Asn606 and Asn611 are each glycosylated (N-linked (GlcNAc...) asparagine). Cystine bridges form between Cys657–Cys667, Cys661–Cys673, and Cys675–Cys684. The region spanning 657–685 is the EGF-like domain; sequence CRSKCHGHGVCDSNRHCYCEEGWAPPDCT. A helical membrane pass occupies residues 697–717; the sequence is GLLLSLLVLLVLVMLGASYWY. Phosphotyrosine; by HCK and LCK is present on residues Tyr715 and Tyr735. The Cytoplasmic portion of the chain corresponds to 718–863; sequence RARLHQRLCQ…PPPTVSSLYL (146 aa). A disordered region spans residues 736 to 863; sequence RAAQSGPSER…PPPTVSSLYL (128 aa). The span at 767 to 778 shows a compositional bias: pro residues; sequence PAPPSRPLPPDP. Over residues 779–789 the composition is skewed to basic and acidic residues; the sequence is VSKRLQAELAD. Pro residues-rich tracts occupy residues 791–800 and 813–824; these read PNPPTRPLPA and AKPPPPRKPLPA. Short sequence motifs (SH3-binding) lie at residues 815-821 and 850-856; these read PPPPRKP and RPAPPPP.

Interacts with ITAGV-ITGB3 (vitronectin receptor). Interacts with SH3GL2 and SNX9; this interaction occurs preferentially with ADAM15 precursor, rather than the processed form, suggesting it occurs in a secretory pathway compartment prior to the medial Golgi. Interacts with ITAG9-ITGB1. Interacts specifically with Src family protein-tyrosine kinases (PTKs). Interacts with SH3PXD2A. Interacts with ITAGV-ITGB1. Interacts with GRB2, HCK, ITSN1, ITSN2, LYN, MAPK1, MAPK3, NCF1, NCK1, nephrocystin, PTK6, SNX33, LCK and SRC. It depends on Zn(2+) as a cofactor. In terms of processing, the precursor is cleaved by a furin endopeptidase. Post-translationally, phosphorylation increases association with PTKs. Expressed in colon and small intestine. Expressed in airway smooth muscle and glomerular mesangial cells (at protein level). Ubiquitously expressed. Overexpressed in atherosclerotic lesions. Constitutively expressed in cultured endothelium and smooth muscle. Expressed in chondrocytes. Expressed in airway smooth muscle and glomerular mesangial cells.

It is found in the endomembrane system. The protein localises to the cell junction. It localises to the adherens junction. Its subcellular location is the cell projection. The protein resides in the cilium. It is found in the flagellum. The protein localises to the cytoplasmic vesicle. It localises to the secretory vesicle. Its subcellular location is the acrosome. Inhibited by hydroxamate-type metalloproteinase inhibitors such as marimastat. Inhibited by metalloproteinase inhibitor 2 (TIMP-2) and TIMP-3 at nanomolar concentrations. Not significantly inhibited by TIMP-1 at concentrations of up to 100 nM. Not activated by PMA or ionomycin. Its function is as follows. Active metalloproteinase with gelatinolytic and collagenolytic activity. Plays a role in the wound healing process. Mediates both heterotypic intraepithelial cell/T-cell interactions and homotypic T-cell aggregation. Inhibits beta-1 integrin-mediated cell adhesion and migration of airway smooth muscle cells. Suppresses cell motility on or towards fibronectin possibly by driving alpha-v/beta-1 integrin (ITAGV-ITGB1) cell surface expression via ERK1/2 inactivation. Cleaves E-cadherin in response to growth factor deprivation. Plays a role in glomerular cell migration. Plays a role in pathological neovascularization. May play a role in cartilage remodeling. May be proteolytically processed, during sperm epididymal maturation and the acrosome reaction. May play a role in sperm-egg binding through its disintegrin domain. The protein is Disintegrin and metalloproteinase domain-containing protein 15 (ADAM15) of Homo sapiens (Human).